We begin with the raw amino-acid sequence, 423 residues long: Serine--tRNA ligase (423 aa).

230 to 232 (TAE) provides a ligand contact to L-serine. 261–263 (RQE) is a binding site for ATP. E284 contributes to the L-serine binding site. Residue 348-351 (EISS) coordinates ATP. Residue S384 coordinates L-serine.

This sequence belongs to the class-II aminoacyl-tRNA synthetase family. Type-1 seryl-tRNA synthetase subfamily. In terms of assembly, homodimer. The tRNA molecule binds across the dimer.

It localises to the cytoplasm. The enzyme catalyses tRNA(Ser) + L-serine + ATP = L-seryl-tRNA(Ser) + AMP + diphosphate + H(+). It carries out the reaction tRNA(Sec) + L-serine + ATP = L-seryl-tRNA(Sec) + AMP + diphosphate + H(+). It functions in the pathway aminoacyl-tRNA biosynthesis; selenocysteinyl-tRNA(Sec) biosynthesis; L-seryl-tRNA(Sec) from L-serine and tRNA(Sec): step 1/1. In terms of biological role, catalyzes the attachment of serine to tRNA(Ser). Is also able to aminoacylate tRNA(Sec) with serine, to form the misacylated tRNA L-seryl-tRNA(Sec), which will be further converted into selenocysteinyl-tRNA(Sec). This Thermoanaerobacter pseudethanolicus (strain ATCC 33223 / 39E) (Clostridium thermohydrosulfuricum) protein is Serine--tRNA ligase.